We begin with the raw amino-acid sequence, 428 residues long: MENPYEITAIVAREILDSRGNPTVEVDVHTPIAMGRAAVPSGASTGTHEAVELRDGGKRYHGKGVRRAVENVNKIIAPELIGMDVRWQREIDKLLIELDGTENKSNLGANAILAVSLAVAKAAANSLELPLYQYLGGVNAYVLPVPLSNVINGGVHAGNELDFQEFMIMPIGASSFREAIRWVSETYHVLKRVIMGKYGKNAVNVGDEGGFAPPMKEVTEPLDALIKAIEEAGYKPGDEIALAIDAASSEFFKDGKYIVGGKEYTREELLDLYKELVSTYPIVSIEDPFHEEDWEGFVMITNELGKKIQIVGDDLFVTNPRRLKKGIELGAANALLLKVNQIGTLTEAMDAAYTAFRAGYSVIVSHRSGETEDTTIADLAVALNAGQIKTGAPARSDRNAKYNQLIRIEEELEGIAVYAGKNFRKVFF.

(2R)-2-phosphoglycerate is bound at residue glutamine 164. The Proton donor role is filled by glutamate 208. The Mg(2+) site is built by aspartate 245, glutamate 286, and aspartate 313. The (2R)-2-phosphoglycerate site is built by lysine 338, arginine 367, serine 368, and lysine 389. Residue lysine 338 is the Proton acceptor of the active site.

It belongs to the enolase family. It depends on Mg(2+) as a cofactor.

It localises to the cytoplasm. It is found in the secreted. The protein localises to the cell surface. It catalyses the reaction (2R)-2-phosphoglycerate = phosphoenolpyruvate + H2O. It participates in carbohydrate degradation; glycolysis; pyruvate from D-glyceraldehyde 3-phosphate: step 4/5. In terms of biological role, catalyzes the reversible conversion of 2-phosphoglycerate (2-PG) into phosphoenolpyruvate (PEP). It is essential for the degradation of carbohydrates via glycolysis. The polypeptide is Enolase (Pyrococcus horikoshii (strain ATCC 700860 / DSM 12428 / JCM 9974 / NBRC 100139 / OT-3)).